The following is a 475-amino-acid chain: Ankyrin repeat, SAM and basic leucine zipper domain-containing protein 1 (475 aa).

The segment at 1-25 is disordered; the sequence is MAAGPLRGLAVAGGGESSDSEDDGW. Phosphoserine occurs at positions 17, 18, and 20. 6 ANK repeats span residues 45-74, 78-107, 110-144, 148-177, 181-210, and 214-243; these read ERQE…SVDT, YGWT…NASF, DKQT…DPNV, RLMT…EVNT, NGYT…NKMI, and DGKT…PLEG. Positions 272-334 constitute an SAM domain; it reads SYTAFGDLEI…KIMAALKELE (63 aa).

Interacts with DDX4, PIWIL1, RANBP9 and TDRD1.

It localises to the cytoplasm. Plays a central role during spermatogenesis by repressing transposable elements and preventing their mobilization, which is essential for the germline integrity. Acts via the piRNA metabolic process, which mediates the repression of transposable elements during meiosis by forming complexes composed of piRNAs and Piwi proteins and governs the methylation and subsequent repression of transposons. Its association with pi-bodies suggests a participation in the primary piRNAs metabolic process. Required prior to the pachytene stage to facilitate the production of multiple types of piRNAs, including those associated with repeats involved in the regulation of retrotransposons. May act by mediating protein-protein interactions during germ cell maturation. The polypeptide is Ankyrin repeat, SAM and basic leucine zipper domain-containing protein 1 (ASZ1) (Bos taurus (Bovine)).